A 933-amino-acid chain; its full sequence is Isoleucine--tRNA ligase (933 aa).

Residues 57-67 (PYANGNIHVGH) carry the 'HIGH' region motif. Residue E554 participates in L-isoleucyl-5'-AMP binding. Positions 595 to 599 (KMSKS) match the 'KMSKS' region motif. Residue K598 participates in ATP binding.

The protein belongs to the class-I aminoacyl-tRNA synthetase family. IleS type 1 subfamily. In terms of assembly, monomer.

The protein localises to the cytoplasm. The enzyme catalyses tRNA(Ile) + L-isoleucine + ATP = L-isoleucyl-tRNA(Ile) + AMP + diphosphate. In terms of biological role, catalyzes the attachment of isoleucine to tRNA(Ile). As IleRS can inadvertently accommodate and process structurally similar amino acids such as valine, to avoid such errors it has two additional distinct tRNA(Ile)-dependent editing activities. One activity is designated as 'pretransfer' editing and involves the hydrolysis of activated Val-AMP. The other activity is designated 'posttransfer' editing and involves deacylation of mischarged Val-tRNA(Ile). The protein is Isoleucine--tRNA ligase of Streptococcus pyogenes serotype M3 (strain ATCC BAA-595 / MGAS315).